The chain runs to 360 residues: Archaemetzincin-2 (360 aa).

Position 254 (His254) interacts with Zn(2+). Glu255 functions as the Proton acceptor in the catalytic mechanism. Residues His258, His264, Cys265, Cys270, Cys289, and Cys292 each contribute to the Zn(2+) site.

It belongs to the peptidase M54 family. The cofactor is Zn(2+).

In terms of biological role, probable zinc metalloprotease. The sequence is that of Archaemetzincin-2 (AMZ2) from Pongo abelii (Sumatran orangutan).